The primary structure comprises 278 residues: Protein NIF3 homolog (278 aa).

This sequence belongs to the GTP cyclohydrolase I type 2/NIF3 family.

The chain is Protein NIF3 homolog from Schizosaccharomyces pombe (strain 972 / ATCC 24843) (Fission yeast).